Here is a 268-residue protein sequence, read N- to C-terminus: MMAGAEAPQPQKRYYRQRAHSNPMADHTLRYPVKPEEMDWSELYPEFFAPLIQNKSHDDPKDEKEKHSGAQVEFADIGCGYGGLLVALSPLFPDTLILGLEIRVKVSDYVQDRIRALRAAPGGGFQNIACLRSNAMKHLPNFFRKGQLAKMFFLFPDPHFKRTKHKWRIISPTLLAEYAYVLRVGGLVYTVTDVPELHEWMCTHFEEHPLFERVPLEELSEDPIVEHLGSSTEEGKKVLRNGGKNFPAVFRRIQDPLLQAVTPNPTLP.

Residues methionine 1–serine 21 form a disordered region. Serine 21 bears the Phosphoserine mark. S-adenosyl-L-methionine contacts are provided by glycine 78, glutamate 101, arginine 103, asparagine 134, alanine 135, and leucine 154. Aspartate 157 is a catalytic residue. The segment at proline 158 to lysine 166 is alphaC helix. Positions 232 and 234 each coordinate S-adenosyl-L-methionine. Positions threonine 232–arginine 240 are alpha6 helix.

It belongs to the class I-like SAM-binding methyltransferase superfamily. TrmB family. As to quaternary structure, catalytic component of the METTL1-WDR4 complex, composed of METTL1 and WDR4. Phosphorylation at Ser-21 by PKB/AKT1 inactivates its methyltransferase activity via a steric interference mechanism in the active site that locally disrupts the catalytic center. Phosphorylation at Ser-21 does not affect the interaction with WDR4.

The protein localises to the nucleus. It carries out the reaction guanosine(46) in tRNA + S-adenosyl-L-methionine = N(7)-methylguanosine(46) in tRNA + S-adenosyl-L-homocysteine. The enzyme catalyses a guanosine in mRNA + S-adenosyl-L-methionine = an N(7)-methylguanosine in mRNA + S-adenosyl-L-homocysteine. The catalysed reaction is a guanosine in miRNA + S-adenosyl-L-methionine = an N(7)-methylguanosine in miRNA + S-adenosyl-L-homocysteine. It functions in the pathway tRNA modification; N(7)-methylguanine-tRNA biosynthesis. Its function is as follows. Catalytic component of METTL1-WDR4 methyltransferase complex that mediates the formation of N(7)-methylguanine in a subset of RNA species, such as tRNAs, mRNAs and microRNAs (miRNAs). Catalyzes the formation of N(7)-methylguanine at position 46 (m7G46) in a large subset of tRNAs that contain the 5'-RAGGU-3' motif within the variable loop. M7G46 interacts with C13-G22 in the D-loop to stabilize tRNA tertiary structure and protect tRNAs from decay. Also acts as a methyltransferase for a subset of internal N(7)-methylguanine in mRNAs. Internal N(7)-methylguanine methylation of mRNAs in response to stress promotes their relocalization to stress granules, thereby suppressing their translation. Also methylates a specific subset of miRNAs, such as let-7. N(7)-methylguanine methylation of let-7 miRNA promotes let-7 miRNA processing by disrupting an inhibitory secondary structure within the primary miRNA transcript (pri-miRNA). Acts as a regulator of embryonic stem cell self-renewal and differentiation. The sequence is that of tRNA (guanine-N(7)-)-methyltransferase from Mus musculus (Mouse).